Here is a 344-residue protein sequence, read N- to C-terminus: Dihydroorotate dehydrogenase (quinone) (344 aa).

Residues 64 to 68 (AGLDK) and Thr-88 contribute to the FMN site. A substrate-binding site is contributed by Lys-68. 113 to 117 (NRMGF) lines the substrate pocket. Asn-144 and Asn-177 together coordinate FMN. Residue Asn-177 coordinates substrate. Ser-180 serves as the catalytic Nucleophile. Asn-182 contacts substrate. FMN-binding residues include Lys-222 and Thr-250. Residue 251 to 252 (NT) coordinates substrate. Residues Gly-273, Gly-302, and 323–324 (YS) each bind FMN.

It belongs to the dihydroorotate dehydrogenase family. Type 2 subfamily. In terms of assembly, monomer. FMN serves as cofactor.

The protein localises to the cell membrane. It carries out the reaction (S)-dihydroorotate + a quinone = orotate + a quinol. It participates in pyrimidine metabolism; UMP biosynthesis via de novo pathway; orotate from (S)-dihydroorotate (quinone route): step 1/1. Functionally, catalyzes the conversion of dihydroorotate to orotate with quinone as electron acceptor. The sequence is that of Dihydroorotate dehydrogenase (quinone) from Polynucleobacter asymbioticus (strain DSM 18221 / CIP 109841 / QLW-P1DMWA-1) (Polynucleobacter necessarius subsp. asymbioticus).